We begin with the raw amino-acid sequence, 230 residues long: RNA chaperone ProQ (230 aa).

The disordered stretch occupies residues Ala-106 to Ile-181. Positions Arg-146 to Pro-155 are enriched in basic and acidic residues. Positions Ala-158–Ser-167 are enriched in low complexity.

Belongs to the ProQ family.

It localises to the cytoplasm. Its function is as follows. RNA chaperone with significant RNA binding, RNA strand exchange and RNA duplexing activities. May regulate ProP activity through an RNA-based, post-transcriptional mechanism. In Cronobacter sakazakii (strain ATCC BAA-894) (Enterobacter sakazakii), this protein is RNA chaperone ProQ.